The sequence spans 282 residues: MTLIDGKKLSIDLKERLTDQLREYKEQTGIVPKLVAIIVGDDPASKTYVGSKEKACEKVGINSEVITLPEATTEQELLELIDKLNDDSSVHAILVQLPLPTHINKQKVIYAIKPEKDVDGFHPANVGRLQLRDKKCLESCTPKGILTMLKEYGIQTEGAHAVVVGASNVVGKPVSQLLLNAKATVTTCHRFTKDLKSHTTKADILVVAVGKPGFITADMVKDGAVVIDVGINHVDGKIVGDVDFEAVKDKVAAITPVPGGVGPMTITELLYNTFQCAQELNR.

NADP(+)-binding positions include 165 to 167 (GAS) and isoleucine 231.

The protein belongs to the tetrahydrofolate dehydrogenase/cyclohydrolase family. In terms of assembly, homodimer.

It catalyses the reaction (6R)-5,10-methylene-5,6,7,8-tetrahydrofolate + NADP(+) = (6R)-5,10-methenyltetrahydrofolate + NADPH. The enzyme catalyses (6R)-5,10-methenyltetrahydrofolate + H2O = (6R)-10-formyltetrahydrofolate + H(+). The protein operates within one-carbon metabolism; tetrahydrofolate interconversion. In terms of biological role, catalyzes the oxidation of 5,10-methylenetetrahydrofolate to 5,10-methenyltetrahydrofolate and then the hydrolysis of 5,10-methenyltetrahydrofolate to 10-formyltetrahydrofolate. The sequence is that of Bifunctional protein FolD from Francisella philomiragia subsp. philomiragia (strain ATCC 25017 / CCUG 19701 / FSC 153 / O#319-036).